Reading from the N-terminus, the 40-residue chain is Metallothionein-1 (40 aa).

Belongs to the metallothionein superfamily. Type 5 family.

Functionally, this protein binds cations of several transition elements. It is thought to be involved in detoxification processes. This is Metallothionein-1 (MtnA) from Drosophila ananassae (Fruit fly).